The chain runs to 232 residues: Phosphoglycolate phosphatase (232 aa).

The active-site Nucleophile is the D13. Residues D13, D15, and D175 each contribute to the Mg(2+) site.

Belongs to the HAD-like hydrolase superfamily. CbbY/CbbZ/Gph/YieH family. As to quaternary structure, monomer. Mg(2+) serves as cofactor. The cofactor is chloride.

It catalyses the reaction 2-phosphoglycolate + H2O = glycolate + phosphate. Its pathway is organic acid metabolism; glycolate biosynthesis; glycolate from 2-phosphoglycolate: step 1/1. Functionally, specifically catalyzes the dephosphorylation of 2-phosphoglycolate. Is involved in the dissimilation of the intracellular 2-phosphoglycolate formed during the DNA repair of 3'-phosphoglycolate ends, a major class of DNA lesions induced by oxidative stress. This chain is Phosphoglycolate phosphatase, found in Yersinia pseudotuberculosis serotype I (strain IP32953).